Here is a 30-residue protein sequence, read N- to C-terminus: Thylakoid lumenal 17 kDa protein (30 aa).

The protein resides in the plastid. It localises to the chloroplast thylakoid lumen. This is Thylakoid lumenal 17 kDa protein from Spinacia oleracea (Spinach).